The following is a 361-amino-acid chain: Chorismate synthase (361 aa).

NADP(+)-binding residues include Arg-48 and Arg-54. FMN-binding positions include 125-127, 238-239, Gly-278, 293-297, and Arg-319; these read RSS, NA, and KPTSS.

Belongs to the chorismate synthase family. As to quaternary structure, homotetramer. The cofactor is FMNH2.

It catalyses the reaction 5-O-(1-carboxyvinyl)-3-phosphoshikimate = chorismate + phosphate. It participates in metabolic intermediate biosynthesis; chorismate biosynthesis; chorismate from D-erythrose 4-phosphate and phosphoenolpyruvate: step 7/7. In terms of biological role, catalyzes the anti-1,4-elimination of the C-3 phosphate and the C-6 proR hydrogen from 5-enolpyruvylshikimate-3-phosphate (EPSP) to yield chorismate, which is the branch point compound that serves as the starting substrate for the three terminal pathways of aromatic amino acid biosynthesis. This reaction introduces a second double bond into the aromatic ring system. This Vibrio parahaemolyticus serotype O3:K6 (strain RIMD 2210633) protein is Chorismate synthase.